The following is a 1304-amino-acid chain: Histone-lysine N-methyltransferase met-2 (1304 aa).

Residues 1 to 16 (MDQQEPSNNVDTSSIL) show a composition bias toward polar residues. Positions 1-31 (MDQQEPSNNVDTSSILSDDGMETQEQSSFVT) are disordered. The stretch at 97-129 (NESEQEAVAAQRRVDAEKTAKDEAELKQQEEAE) forms a coiled coil. Positions 834–909 (FHRNSPIHTP…FSFDARIDTA (76 aa)) constitute an MBD domain. One can recognise a Pre-SET domain in the interval 971 to 1049 (SGCSCDGDCS…SCYNRVVQNN (79 aa)). Zn(2+)-binding residues include Cys973, Cys975, Cys979, Cys985, Cys987, Cys1030, Cys1034, Cys1036, and Cys1041. The SET domain maps to 1052-1277 (YPMHIFKTAQ…AGDELTWDYQ (226 aa)). S-adenosyl-L-methionine is bound by residues 1062–1064 (SGW), Asp1098, and Tyr1100. The span at 1113–1122 (EKGREDHETD) shows a compositional bias: basic and acidic residues. The disordered stretch occupies residues 1113–1201 (EKGREDHETD…DSMEKDNIES (89 aa)). The segment covering 1128–1144 (DESDYDDEEGSDGDSGD) has biased composition (acidic residues). A compositionally biased stretch (basic and acidic residues) spans 1152 to 1165 (KRQDSSESGEETKR). Residues 1166 to 1178 (LTRQKRKQSKKSG) are compositionally biased toward basic residues. Residues 1182–1201 (SVEKDDTTPRDSMEKDNIES) are compositionally biased toward basic and acidic residues. Residues Arg1231 and 1234–1235 (NH) contribute to the S-adenosyl-L-methionine site. Positions 1237, 1290, 1292, and 1297 each coordinate Zn(2+). The 17-residue stretch at 1286-1302 (TQLTCHCGAENCTGRLL) folds into the Post-SET domain.

It belongs to the class V-like SAM-binding methyltransferase superfamily.

It localises to the nucleus. Its subcellular location is the chromosome. The protein localises to the cytoplasm. It carries out the reaction N(6)-methyl-L-lysyl(9)-[histone H3] + S-adenosyl-L-methionine = N(6),N(6)-dimethyl-L-lysyl(9)-[histone H3] + S-adenosyl-L-homocysteine + H(+). The enzyme catalyses L-lysyl(9)-[histone H3] + S-adenosyl-L-methionine = N(6)-methyl-L-lysyl(9)-[histone H3] + S-adenosyl-L-homocysteine + H(+). Histone methyltransferase which is required for the mono- and dimethylation of 'Lys-9' of histone H3. This increases the efficiency of set-25-mediated trimethylation of histone H3 'Lys-9'. Involved in the transcriptional repression of lin-3 which is required for the negative regulation of vulval cell fate specification during postembryonic development. Has a role in blocking checkpoint signaling and mediating the transcriptional silencing of meiotic sex chromosome inactivation; a mechanism which enables checkpoint proteins to distinguish between the partnerless male X chromosome and asynapsed chromosomes thereby shielding the lone X from inappropriate activation of an apoptotic program. Operates redundantly with set-25 to position chromatin at the nuclear periphery. Required for small-RNA-induced H3K9 methylation. Together with set-25, protects and stabilizes repeat-rich genomic regions by suppressing transcription-induced replication stress through methylation of H3K9. Together with spr-5, required for transgenerational fertility. The polypeptide is Histone-lysine N-methyltransferase met-2 (met-2) (Caenorhabditis elegans).